A 402-amino-acid polypeptide reads, in one-letter code: LIM/homeobox protein Lhx5 (402 aa).

2 LIM zinc-binding domains span residues V3–G61 and T62–L125. The segment covering S124–S135 has biased composition (low complexity). 2 disordered regions span residues S124–T186 and H298–W402. A compositionally biased stretch (basic and acidic residues) spans D151–A167. A DNA-binding region (homeobox) is located at residues R180 to K239. Low complexity-rich tracts occupy residues P300 to S311 and P322 to A336.

As to expression, expressed in fetal brain and in various regions of the adult central nervous system including the spinal cord, the thalamus, and the cerebellum.

It localises to the nucleus. Plays an essential role in the regulation of neuronal differentiation and migration during development of the central nervous system. This Homo sapiens (Human) protein is LIM/homeobox protein Lhx5 (LHX5).